Reading from the N-terminus, the 788-residue chain is Response regulator SSK1 (788 aa).

In terms of domain architecture, Response regulatory spans 534–691; it reads NVLIVEDNII…WLERKVKEWG (158 aa). 4-aspartylphosphate is present on aspartate 583.

Belongs to the SSK1 family.

It is found in the cytoplasm. Functionally, two-domain response regulator protein in the two-component signal transduction system of the HOG1 pathway. Controls high-osmolarity adaptation and fungicide sensitivity via its regulation of the phosphorylation of HOG1. This Cochliobolus heterostrophus (strain C5 / ATCC 48332 / race O) (Southern corn leaf blight fungus) protein is Response regulator SSK1.